Here is a 422-residue protein sequence, read N- to C-terminus: Hexuronate transporter (422 aa).

The next 11 helical transmembrane spans lie at 9–29 (VILFLFLAGVINYLDRSALSI), 45–65 (MGLIFSSFSIGYAIFNFLGGV), 82–102 (VWSLFSGAVALAFGFVSLLII), 141–161 (TPLGGAISGPIVGMIAVAFSW), 163–183 (VSFVLIMIIGLIWAVLWFKFV), 219–239 (LFTAFAFFAYNYILFFFLTWF), 256–276 (VITVIPWILGFIGLAAGGFVS), 294–314 (VVLVTCLFSSAVLIGFAGLVA), 321–341 (TLVALSVFFLYLTGAIYWAVI), 356–376 (FMHFLANTAGIIGPALTGFIV), and 381–401 (TFSGAFLLAGGLAVFASLAVI).

It belongs to the major facilitator superfamily. Phthalate permease family.

The protein localises to the cell membrane. The enzyme catalyses aldehydo-D-glucuronate(in) + H(+)(in) = aldehydo-D-glucuronate(out) + H(+)(out). It carries out the reaction aldehydo-D-galacturonate(out) + H(+)(out) = aldehydo-D-galacturonate(in) + H(+)(in). Functionally, transport of aldohexuronates such as D-glucuronate and D-galacturonate. This is Hexuronate transporter from Bacillus subtilis (strain 168).